We begin with the raw amino-acid sequence, 571 residues long: uncharacterized protein (571 aa).

5 helical membrane passes run 10–29 (VRLH…HFIG), 36–55 (VSLG…GLLF), 65–87 (WAFF…FASL), 96–118 (ALAV…LFRF), and 166–188 (ATTY…PRLL). Positions 294–378 (TEVDDQELLS…IATAARNLGF (85 aa)) constitute an RCK C-terminal domain. The next 6 membrane-spanning stretches (helical) occupy residues 388–406 (LVYL…LLQV), 411–433 (VPLG…WLYS), 446–465 (LRLL…GLAA), 480–502 (LFAK…GLLL), 509–531 (LPPI…LNAL), and 546–568 (VPFA…CAVA).

Belongs to the AAE transporter (TC 2.A.81) family.

It is found in the cell membrane. This is an uncharacterized protein from Bordetella bronchiseptica (strain ATCC BAA-588 / NCTC 13252 / RB50) (Alcaligenes bronchisepticus).